The sequence spans 648 residues: 1-deoxy-D-xylulose-5-phosphate synthase 1 (648 aa).

Thiamine diphosphate-binding positions include H82 and A123–S125. D154 contributes to the Mg(2+) binding site. Residues G155–S156, N183, Y292, and E374 each bind thiamine diphosphate. A Mg(2+)-binding site is contributed by N183.

This sequence belongs to the transketolase family. DXPS subfamily. Homodimer. The cofactor is Mg(2+). Requires thiamine diphosphate as cofactor.

It catalyses the reaction D-glyceraldehyde 3-phosphate + pyruvate + H(+) = 1-deoxy-D-xylulose 5-phosphate + CO2. It participates in metabolic intermediate biosynthesis; 1-deoxy-D-xylulose 5-phosphate biosynthesis; 1-deoxy-D-xylulose 5-phosphate from D-glyceraldehyde 3-phosphate and pyruvate: step 1/1. Catalyzes the acyloin condensation reaction between C atoms 2 and 3 of pyruvate and glyceraldehyde 3-phosphate to yield 1-deoxy-D-xylulose-5-phosphate (DXP). This is 1-deoxy-D-xylulose-5-phosphate synthase 1 from Cereibacter sphaeroides (strain ATCC 17023 / DSM 158 / JCM 6121 / CCUG 31486 / LMG 2827 / NBRC 12203 / NCIMB 8253 / ATH 2.4.1.) (Rhodobacter sphaeroides).